Here is a 243-residue protein sequence, read N- to C-terminus: Tryptophan synthase alpha chain (243 aa).

Catalysis depends on proton acceptor residues Glu31 and Asp42.

This sequence belongs to the TrpA family. In terms of assembly, tetramer of two alpha and two beta chains.

The enzyme catalyses (1S,2R)-1-C-(indol-3-yl)glycerol 3-phosphate + L-serine = D-glyceraldehyde 3-phosphate + L-tryptophan + H2O. It participates in amino-acid biosynthesis; L-tryptophan biosynthesis; L-tryptophan from chorismate: step 5/5. Its function is as follows. The alpha subunit is responsible for the aldol cleavage of indoleglycerol phosphate to indole and glyceraldehyde 3-phosphate. The protein is Tryptophan synthase alpha chain of Staphylococcus haemolyticus (strain JCSC1435).